A 1479-amino-acid polypeptide reads, in one-letter code: Peroxidasin homolog (1479 aa).

Positions 1 to 26 (MAKRSRGPGRRCLLALVLFCAWGTLA) are cleaved as a signal peptide. One can recognise an LRRNT domain in the interval 27-63 (VVAQKPGAGCPSRCLCFRTTVRCMHLLLEAVPAVAPQ). 2 cysteine pairs are disulfide-bonded: C36/C42 and C40/C49. 6 LRR repeats span residues 61–84 (APQT…AFRR), 85–108 (LRNL…AFED), 110–132 (ENLK…AFKG), 133–156 (LASL…SFQH), 157–180 (LPKL…TFNH), and 182–204 (ESMK…LWLA). The LRRCT domain maps to 192–244 (NTLHCDCEILWLADLLKTYAESGNAQAAAICEYPRRIQGRSVATITPEELNCE). 6 disulfide bridges follow: C196–C243, C198–C222, C267–C317, C363–C412, C454–C502, and C546–C594. 4 Ig-like C2-type domains span residues 246–332 (PRIT…QEVT), 342–428 (PTFV…AFII), 433–520 (PQFT…LTVQ), and 521–610 (PRVT…MVLS). 4 N-linked (GlcNAc...) asparagine glycosylation sites follow: N640, N699, N719, and N731. 4 disulfides stabilise this stretch: C723/C885, C732/C748, C847/C857, and C851/C875. D826 serves as a coordination point for heme b. Catalysis depends on H827, which acts as the Proton acceptor. D828 lines the Ca(2+) pocket. An N-linked (GlcNAc...) asparagine glycan is attached at N865. Ca(2+)-binding residues include T907, Y909, D911, and S913. Cysteines 959 and 970 form a disulfide. Residue N964 is glycosylated (N-linked (GlcNAc...) asparagine). Heme b contacts are provided by E980 and H1074. One copy of the LRR 7 repeat lies at 1151-1175 (ALDLAAINIQRGRDHGIPPYHDYRV). The residue at position 1176 (Y1176) is a Phosphotyrosine. 2 disulfides stabilise this stretch: C1177-C1234 and C1275-C1301. N-linked (GlcNAc...) asparagine glycosylation is present at N1178. S1180 carries the phosphoserine modification. An LRR 8 repeat occupies 1270–1291 (LARILCDNADNITRVQSDVFRV). N-linked (GlcNAc...) asparagine glycans are attached at residues N1280, N1368, and N1425. Residues 1315–1411 (CCEDCRTRGQ…QIKKLESRLS (97 aa)) form a required in homotrimerization region. Residues 1342–1380 (YQEDKPTKKTRPRKIPSVGRQGEHLSNSTSAFSTRSDAS) form a disordered region. Positions 1365 to 1380 (HLSNSTSAFSTRSDAS) are enriched in polar residues. Positions 1413-1471 (TECVDAGGESHANNTKWKKDACTICECKDGQVTCFVEACPPATCAVPVNIPGACCPVCL) constitute a VWFC domain.

This sequence belongs to the peroxidase family. XPO subfamily. As to quaternary structure, homotrimer; disulfide-linked. The homotrimer form is predominant. Homooligomer; disulfide-linked. Oligomerization occurs intracellularly before C-terminal proteolytic cleavage. Interacts with PXDNL; this interaction inhibits the peroxidase activity of PXDN. Ca(2+) serves as cofactor. Requires heme b as cofactor. Post-translationally, glycosylated. Four sites are completely N-glycosylated (Asn-640, Asn-731, Asn-865 and Asn-1425), whereas the others are found partially glycosylated. Processed by FURIN and the proteolytic processing largely depends on the peroxidase activity of PXDN. The proteolytic cleavage occurs after intracellular homotrimerization and releases into the extracellular matrix a large, catalytically active fragment and a smaller fragment consisting primarily of the C-terminal VWFC domain. The processing enhances both peroxidase activity and sulfilimine cross-links formation. In terms of tissue distribution, expressed at higher levels in heart, lung, ovary, spleen, intestine and placenta, and at lower levels in liver, colon, pancreas, kidney, thymus, skeletal muscle and prostate. Expressed in tumors such as melanoma, breast cancer, ovarian cancer and glioblastoma. A shorter form probably lacking the signal sequence is found in testis and in EB1 cells undergoing p53/TP53-dependent apoptosis.

It is found in the secreted. The protein localises to the extracellular space. Its subcellular location is the extracellular matrix. The protein resides in the endoplasmic reticulum. It localises to the cell surface. It is found in the basement membrane. The enzyme catalyses L-lysyl-[collagen] + L-methionyl-[collagen] + H2O2 = [collagen]-L-lysyl-N-S-L-methionyl-[collagen] + 2 H2O + H(+). The catalysed reaction is bromide + H2O2 = hypobromite + H2O. It carries out the reaction L-lysyl-[collagen] + L-methionyl-[collagen] + hypobromite = [collagen]-L-lysyl-N-S-L-methionyl-[collagen] + bromide + H2O + H(+). It catalyses the reaction L-tyrosyl-[protein] + bromide + H2O2 + H(+) = 3-bromo-L-tyrosyl-[protein] + 2 H2O. The enzyme catalyses hypobromite + L-tyrosyl-[protein] + H(+) = 3-bromo-L-tyrosyl-[protein] + H2O. The hypobromous acid formation is activated by increasing nitrite concentrations and inhibited by increasing urate concentrations. Catalyzes the two-electron oxidation of bromide by hydrogen peroxide and generates hypobromite as a reactive intermediate which mediates the formation of sulfilimine cross-links between methionine and hydroxylysine residues within an uncross-linked collagen IV/COL4A1 NC1 hexamer. In turns, directly contributes to the collagen IV network-dependent fibronectin/FN and laminin assembly, which is required for full extracellular matrix (ECM)-mediated signaling. Thus, sulfilimine cross-links are essential for growth factor-induced cell proliferation and survival in endothelial cells, an event essential to basement membrane integrity. In addition, through the bromide oxidation, may promote tubulogenesis and induce angiogenesis through ERK1/2, Akt, and FAK pathways. Moreover brominates alpha2 collagen IV chain/COL4A2 at 'Tyr-1485' and leads to bromine enrichment of the basement membranes. In vitro, can also catalyze the two-electron oxidation of thiocyanate and iodide and these two substrates could effectively compete with bromide and thus inhibit the formation of sulfilimine bonds. Binds laminins. May play a role in the organization of eyeball structure and lens development during eye development. This is Peroxidasin homolog from Homo sapiens (Human).